Here is a 469-residue protein sequence, read N- to C-terminus: MLPSWTIGLLLLATVRGKEICYEPFGCFSDEKPWTGILQRPLKLFPWSPEDIDAHFLLYTNENPNNYQRINITDLATVRASNFQLDRKTRFVIHGFIDDGDSGWPTDLCKKMFKVEKVNCICVDWEHGAWTKYTQAVHNTRVVGAEIAFFIQGLSTELGYGPENVHLIGHSLGAQLAAEAGRRLGGQVGRITGLDPAQPCFEGTPEEVRLDPSDAMFVDVIHTDSASIIPFLSLGIRQKVGHLDFYPNGGKEMPGCQKNILSTIIDINGIWQGIQDFVACSHLRSYKYYSSSILNPDGFLGYPCASYEEFQEGGCFPCPAGGCPKMGHYADQFQGKTSAVGQTFFLNTGSSGNFTSWRYRVSVTLAGTKKVRGSIRIALYGSNGNSKQYQIFKGSLQPNASHTHDIDVDLNVGKVQKVKFLWNNNVINLFWPKLGASRVTVQGGEDRTEYNFCSNDTMRENALQTLYPC.

The N-terminal stretch at 1–17 (MLPSWTIGLLLLATVRG) is a signal peptide. A disulfide bridge connects residues C21 and C27. An N-linked (GlcNAc...) asparagine glycan is attached at N71. The segment at 93–105 (IHGFIDDGDSGWP) is required for galactolipase activity. An intrachain disulfide couples C109 to C120. S171 serves as the catalytic Nucleophile. Residue D195 is the Charge relay system of the active site. E206, R209, D211, and D214 together coordinate Ca(2+). Residues C256 and C280 are joined by a disulfide bond. The required for galactolipase activity stretch occupies residues 257-279 (QKNILSTIIDINGIWQGIQDFVA). Residue H282 is the Charge relay system of the active site. Intrachain disulfides connect C304–C315 and C318–C323. N-linked (GlcNAc...) asparagine glycans are attached at residues N353, N399, and N455. In terms of domain architecture, PLAT spans 357 to 469 (WRYRVSVTLA…ENALQTLYPC (113 aa)). Residues C453 and C469 are joined by a disulfide bond.

Belongs to the AB hydrolase superfamily. Lipase family.

It localises to the secreted. The protein localises to the zymogen granule membrane. Its subcellular location is the cell projection. The protein resides in the neuron projection. The enzyme catalyses a triacylglycerol + H2O = a diacylglycerol + a fatty acid + H(+). It catalyses the reaction a 1,2-diacyl-3-O-(beta-D-galactosyl)-sn-glycerol + 2 H2O = 3-beta-D-galactosyl-sn-glycerol + 2 a fatty acid + 2 H(+). The catalysed reaction is 1,2,3-tri-(9Z-octadecenoyl)-glycerol + H2O = di-(9Z)-octadecenoylglycerol + (9Z)-octadecenoate + H(+). It carries out the reaction di-(9Z)-octadecenoylglycerol + H2O = (9Z-octadecenoyl)-glycerol + (9Z)-octadecenoate + H(+). The enzyme catalyses (9Z-octadecenoyl)-glycerol + H2O = glycerol + (9Z)-octadecenoate + H(+). It catalyses the reaction 1-(9Z-octadecenoyl)-glycerol + H2O = glycerol + (9Z)-octadecenoate + H(+). The catalysed reaction is 1,2,3-tripropanoylglycerol + H2O = dipropanoylglycerol + propanoate + H(+). It carries out the reaction 1,2,3-tributanoylglycerol + H2O = dibutanoylglycerol + butanoate + H(+). The enzyme catalyses 1,2,3-trioctanoylglycerol + H2O = dioctanoylglycerol + octanoate + H(+). It catalyses the reaction 1,2-didecanoylglycerol + H2O = decanoylglycerol + decanoate + H(+). The catalysed reaction is long chain 1,2-diacyl-3-O-beta-D-galactosyl-sn-glycerol + H2O = long chain acyl-3-O-beta-D-galactosyl-sn-glycerol + a fatty acid + H(+). It carries out the reaction 1,2-dioctanoyl-3-O-beta-D-galactosyl-sn-glycerol + H2O = octanoyl-3-(beta-D-galactosyl)-sn-glycerol + octanoate + H(+). The enzyme catalyses 1,2-didodecanoyl-3-beta-D-galactosyl-sn-glycerol + H2O = dodecanoyl-3-beta-D-galactosyl-sn-glycerol + dodecanoate + H(+). It catalyses the reaction 1-beta-D-galactosyl-2,3-didodecanoyl-sn-glycerol + H2O = 1-beta-D-galactosyl-dodecanoyl-sn-glycerol + dodecanoate + H(+). The catalysed reaction is a 1,2-diacyl-3-O-[alpha-D-galactosyl-(1-&gt;6)-beta-D-galactosyl]-sn-glycerol + H2O = acyl-3-O-[alpha-D-galactosyl-(1-&gt;6)-beta-D-galactosyl]-sn-glycerol + a fatty acid + H(+). It carries out the reaction long chain 1,2-diacyl-3-O-[alpha-D-galactosyl-(1-&gt;6)-beta-D-galactosyl]-sn-glycerol + H2O = long chain acyl-3-O-[alpha-D-galactosyl-(1-&gt;6)-beta-D-galactosyl]-sn-glycerol + a fatty acid + H(+). The enzyme catalyses 1,2-dioctanoyl-3-O-[alpha-D-galactosyl-(1-&gt;6)-beta-D-galactosyl]-sn-glycerol + H2O = octanoyl-3-O-[alpha-D-galactosyl-(1-&gt;6)-beta-D-galactosyl]-sn-glycerol + octanoate + H(+). It catalyses the reaction 1,2-didodecanoyl-3-O-[alpha-D-galactosyl-(1-&gt;6)-beta-D-galactosyl]-sn-glycerol + H2O = dodecanoyl-3-O-[alpha-D-galactosyl-(1-&gt;6)-beta-D-galactosyl]-sn-glycerol + dodecanoate + H(+). The catalysed reaction is a 1,2-diacyl-sn-glycero-3-phosphocholine + H2O = a monoacyl-sn-glycero-3-phosphocholine + a fatty acid + H(+). It functions in the pathway glycerolipid metabolism; triacylglycerol degradation. The protein operates within glycolipid metabolism. Functionally, lipase that primarily hydrolyzes triglycerides and galactosylglycerides. In neonates, may play a major role in pancreatic digestion of dietary fats such as milk fat globules enriched in long-chain triglycerides. Hydrolyzes short-, medium- and long-chain fatty acyls in triglycerides without apparent positional specificity. Can completely deacylate triacylglycerols. When the liver matures and bile salt synthesis increases, likely functions mainly as a galactolipase and monoacylglycerol lipase. Hydrolyzes monogalactosyldiglycerols (MGDG) and digalactosyldiacylglycerols (DGDG) present in a plant-based diet, releasing long-chain polyunsaturated fatty acids. Hydrolyzes medium- and long-chain fatty acyls in galactolipids. May act together with LIPF to hydrolyze partially digested triglycerides. Hydrolyzes long-chain monoglycerides with high efficiency. In cytotoxic T cells, contributes to perforin-dependent cell lysis, but is unlikely to mediate direct cytotoxicity. Also has low phospholipase activity. In neurons, required for the localization of the phospholipid 1-oleoyl-2-palmitoyl-PC (OPPC) to neurite tips through acyl chain remodeling of membrane phospholipids. The resulting OPPC-rich lipid membrane domain recruits the t-SNARE protein STX4 by selectively interacting with the STX4 transmembrane domain and this promotes surface expression of the dopamine transporter SLC6A3/DAT at neurite tips by facilitating fusion of SLC6A3-containing transport vesicles with the plasma membrane. This chain is Pancreatic lipase-related protein 2, found in Bos taurus (Bovine).